The primary structure comprises 150 residues: Transcriptional regulator MraZ (150 aa).

SpoVT-AbrB domains follow at residues 7 to 58 (KEQH…EPEI) and 87 to 130 (LDSV…SPEK).

It belongs to the MraZ family. As to quaternary structure, forms oligomers.

Its subcellular location is the cytoplasm. The protein resides in the nucleoid. The sequence is that of Transcriptional regulator MraZ from Chlorobium phaeobacteroides (strain BS1).